We begin with the raw amino-acid sequence, 225 residues long: Uridylate kinase (225 aa).

9-10 (GS) lines the ATP pocket. G46 serves as a coordination point for UMP. G47 and R51 together coordinate ATP. Residues D67 and 115 to 121 (THPAHTT) contribute to the UMP site. ATP-binding residues include T141, N142, Y147, and D150.

The protein belongs to the UMP kinase family. In terms of assembly, homohexamer.

The protein localises to the cytoplasm. The enzyme catalyses UMP + ATP = UDP + ADP. It participates in pyrimidine metabolism; CTP biosynthesis via de novo pathway; UDP from UMP (UMPK route): step 1/1. Inhibited by UTP. Catalyzes the reversible phosphorylation of UMP to UDP. The sequence is that of Uridylate kinase from Methanococcus maripaludis (strain C6 / ATCC BAA-1332).